Here is a 274-residue protein sequence, read N- to C-terminus: Undecaprenyl-diphosphatase 2 (274 aa).

The next 6 membrane-spanning stretches (helical) occupy residues 47-64, 82-102, 110-130, 185-205, 219-239, and 249-269; these read VFVI…CWEY, WKFV…GLTF, LFSP…ILWA, ATEF…LYDL, LMAV…RGLI, and VFAW…WSGL.

Belongs to the UppP family.

The protein localises to the cell inner membrane. The catalysed reaction is di-trans,octa-cis-undecaprenyl diphosphate + H2O = di-trans,octa-cis-undecaprenyl phosphate + phosphate + H(+). Its function is as follows. Catalyzes the dephosphorylation of undecaprenyl diphosphate (UPP). Confers resistance to bacitracin. The chain is Undecaprenyl-diphosphatase 2 from Rhodospirillum rubrum (strain ATCC 11170 / ATH 1.1.1 / DSM 467 / LMG 4362 / NCIMB 8255 / S1).